The sequence spans 438 residues: V-type ATP synthase beta chain (438 aa).

Belongs to the ATPase alpha/beta chains family.

Its function is as follows. Produces ATP from ADP in the presence of a proton gradient across the membrane. The V-type beta chain is a regulatory subunit. In Chlamydia abortus (strain DSM 27085 / S26/3) (Chlamydophila abortus), this protein is V-type ATP synthase beta chain.